The chain runs to 343 residues: Methionine import ATP-binding protein MetN (343 aa).

Residues 2-241 (IKLSNITKVF…PKTPLAQKFI (240 aa)) form the ABC transporter domain. 38–45 (GASGAGKS) serves as a coordination point for ATP.

Belongs to the ABC transporter superfamily. Methionine importer (TC 3.A.1.24) family. The complex is composed of two ATP-binding proteins (MetN), two transmembrane proteins (MetI) and a solute-binding protein (MetQ).

The protein resides in the cell inner membrane. It carries out the reaction L-methionine(out) + ATP + H2O = L-methionine(in) + ADP + phosphate + H(+). The catalysed reaction is D-methionine(out) + ATP + H2O = D-methionine(in) + ADP + phosphate + H(+). In terms of biological role, part of the ABC transporter complex MetNIQ involved in methionine import. Responsible for energy coupling to the transport system. This chain is Methionine import ATP-binding protein MetN, found in Shigella flexneri serotype 5b (strain 8401).